We begin with the raw amino-acid sequence, 601 residues long: Uptake hydrogenase large subunit (601 aa).

Residues cysteine 74, cysteine 77, cysteine 580, and cysteine 583 each coordinate Ni(2+).

Belongs to the [NiFe]/[NiFeSe] hydrogenase large subunit family. As to quaternary structure, heterodimer of a large and a small subunit. Requires Ni(2+) as cofactor.

The protein resides in the cell membrane. It catalyses the reaction H2 + A = AH2. Its function is as follows. This enzyme recycles the H(2) produced by nitrogenase to increase the production of ATP and to protect nitrogenase against inhibition or damage by O(2) under carbon- or phosphate-limited conditions. This is Uptake hydrogenase large subunit (hupL) from Azotobacter chroococcum mcd 1.